A 120-amino-acid chain; its full sequence is NAD(P)H-quinone oxidoreductase subunit 3, chloroplastic (120 aa).

Transmembrane regions (helical) follow at residues 3-23 (ILEG…IPVI), 64-84 (MFAL…PWAV), and 89-109 (LGLS…IGLV).

It belongs to the complex I subunit 3 family. As to quaternary structure, NDH is composed of at least 16 different subunits, 5 of which are encoded in the nucleus.

The protein resides in the plastid. Its subcellular location is the chloroplast thylakoid membrane. The enzyme catalyses a plastoquinone + NADH + (n+1) H(+)(in) = a plastoquinol + NAD(+) + n H(+)(out). The catalysed reaction is a plastoquinone + NADPH + (n+1) H(+)(in) = a plastoquinol + NADP(+) + n H(+)(out). In terms of biological role, NDH shuttles electrons from NAD(P)H:plastoquinone, via FMN and iron-sulfur (Fe-S) centers, to quinones in the photosynthetic chain and possibly in a chloroplast respiratory chain. The immediate electron acceptor for the enzyme in this species is believed to be plastoquinone. Couples the redox reaction to proton translocation, and thus conserves the redox energy in a proton gradient. The polypeptide is NAD(P)H-quinone oxidoreductase subunit 3, chloroplastic (Nephroselmis olivacea (Green alga)).